Reading from the N-terminus, the 674-residue chain is DNA ligase (674 aa).

Residues 35 to 39, 84 to 85, and E118 contribute to the NAD(+) site; these read DYDFD and SL. K120 acts as the N6-AMP-lysine intermediate in catalysis. NAD(+) contacts are provided by R141, E184, K297, and K321. 4 residues coordinate Zn(2+): C415, C418, C433, and C439. In terms of domain architecture, BRCT spans 598–674; it reads LVNTNFEGLT…ITEDEFDALL (77 aa).

This sequence belongs to the NAD-dependent DNA ligase family. LigA subfamily. Mg(2+) serves as cofactor. It depends on Mn(2+) as a cofactor.

The enzyme catalyses NAD(+) + (deoxyribonucleotide)n-3'-hydroxyl + 5'-phospho-(deoxyribonucleotide)m = (deoxyribonucleotide)n+m + AMP + beta-nicotinamide D-nucleotide.. Functionally, DNA ligase that catalyzes the formation of phosphodiester linkages between 5'-phosphoryl and 3'-hydroxyl groups in double-stranded DNA using NAD as a coenzyme and as the energy source for the reaction. It is essential for DNA replication and repair of damaged DNA. This is DNA ligase from Chlorobium phaeovibrioides (strain DSM 265 / 1930) (Prosthecochloris vibrioformis (strain DSM 265)).